Reading from the N-terminus, the 487-residue chain is Betaine aldehyde dehydrogenase (487 aa).

K(+) is bound by residues Ile-27 and Asp-93. An NAD(+)-binding site is contributed by 149 to 151; that stretch reads GAW. The active-site Charge relay system is Lys-161. NAD(+) is bound by residues 175 to 178 and 228 to 231; these read KPSE and SVPT. Leu-243 contacts K(+). Glu-249 serves as the catalytic Proton acceptor. Residues Gly-251, Cys-283, and Glu-384 each coordinate NAD(+). The active-site Nucleophile is Cys-283. Residue Cys-283 is modified to Cysteine sulfenic acid (-SOH). K(+) contacts are provided by Lys-454 and Gly-457. Glu-461 (charge relay system) is an active-site residue.

Belongs to the aldehyde dehydrogenase family. In terms of assembly, dimer of dimers. It depends on K(+) as a cofactor.

The catalysed reaction is betaine aldehyde + NAD(+) + H2O = glycine betaine + NADH + 2 H(+). It functions in the pathway amine and polyamine biosynthesis; betaine biosynthesis via choline pathway; betaine from betaine aldehyde: step 1/1. Involved in the biosynthesis of the osmoprotectant glycine betaine. Catalyzes the irreversible oxidation of betaine aldehyde to the corresponding acid. This Brucella anthropi (strain ATCC 49188 / DSM 6882 / CCUG 24695 / JCM 21032 / LMG 3331 / NBRC 15819 / NCTC 12168 / Alc 37) (Ochrobactrum anthropi) protein is Betaine aldehyde dehydrogenase.